A 304-amino-acid chain; its full sequence is E3 ubiquitin-protein ligase BOI (304 aa).

Residues 178–214 (LQERVKSLYVENQIWRDIAQTNEANANTLRTNLDQVL) are WRD domain. The stretch at 197 to 220 (QTNEANANTLRTNLDQVLAQLETF) forms a coiled coil. Residues 254–291 (CKRCGEREASVLVLPCRHLCLCTVCGGSALLRTCPVCD) form an RING-type zinc finger.

As to quaternary structure, interacts with MYB108/BOS1 and the DELLA proteins GAI, RGA, RGL1, RGL2 and RGL3. Expressed in leaves, siliques, roots, flowering tissues and stigma tips.

It localises to the nucleus. It carries out the reaction S-ubiquitinyl-[E2 ubiquitin-conjugating enzyme]-L-cysteine + [acceptor protein]-L-lysine = [E2 ubiquitin-conjugating enzyme]-L-cysteine + N(6)-ubiquitinyl-[acceptor protein]-L-lysine.. It participates in protein degradation; proteasomal ubiquitin-dependent pathway. Its function is as follows. E3 ubiquitin-protein ligase involved in the regulation of pathogen and abiotic stress responses by facilitating degradation of MYB108/BOI. Attenuates cell death by preventing caspase activation. Has no effect on the stability of the DELLA proteins. Not regulated by MYB108/BOI. In Arabidopsis thaliana (Mouse-ear cress), this protein is E3 ubiquitin-protein ligase BOI (BOI).